The chain runs to 271 residues: Sec-independent protein translocase protein TatC (271 aa).

A run of 6 helical transmembrane segments spans residues 35-55 (IIWT…WHEQ), 93-113 (AFIA…WLFI), 124-144 (YVLP…VFGY), 178-198 (IILG…LALM), 213-233 (SILV…IMNM), and 234-254 (CVFA…AFLV).

The protein belongs to the TatC family. In terms of assembly, forms a complex with TatA.

It is found in the cell inner membrane. Its function is as follows. Part of the twin-arginine translocation (Tat) system that transports large folded proteins containing a characteristic twin-arginine motif in their signal peptide across membranes. This chain is Sec-independent protein translocase protein TatC, found in Koribacter versatilis (strain Ellin345).